A 232-amino-acid polypeptide reads, in one-letter code: 7-cyano-7-deazaguanine synthase (232 aa).

7 to 17 (CSGGLDSVSLA) is a binding site for ATP. 4 residues coordinate Zn(2+): Cys185, Cys193, Cys196, and Cys199.

It belongs to the QueC family. Requires Zn(2+) as cofactor.

It catalyses the reaction 7-carboxy-7-deazaguanine + NH4(+) + ATP = 7-cyano-7-deazaguanine + ADP + phosphate + H2O + H(+). It functions in the pathway purine metabolism; 7-cyano-7-deazaguanine biosynthesis. Catalyzes the ATP-dependent conversion of 7-carboxy-7-deazaguanine (CDG) to 7-cyano-7-deazaguanine (preQ(0)). The sequence is that of 7-cyano-7-deazaguanine synthase from Brucella canis (strain ATCC 23365 / NCTC 10854 / RM-666).